A 350-amino-acid chain; its full sequence is 3-isopropylmalate dehydrogenase (350 aa).

Residue glycine 76–glutamate 87 participates in NAD(+) binding. Positions 94, 104, 132, and 217 each coordinate substrate. Residues aspartate 217, aspartate 241, and aspartate 245 each contribute to the Mg(2+) site. Glycine 275–asparagine 287 contacts NAD(+).

The protein belongs to the isocitrate and isopropylmalate dehydrogenases family. LeuB type 1 subfamily. As to quaternary structure, homodimer. The cofactor is Mg(2+). Mn(2+) serves as cofactor.

It is found in the cytoplasm. The enzyme catalyses (2R,3S)-3-isopropylmalate + NAD(+) = 4-methyl-2-oxopentanoate + CO2 + NADH. The protein operates within amino-acid biosynthesis; L-leucine biosynthesis; L-leucine from 3-methyl-2-oxobutanoate: step 3/4. Functionally, catalyzes the oxidation of 3-carboxy-2-hydroxy-4-methylpentanoate (3-isopropylmalate) to 3-carboxy-4-methyl-2-oxopentanoate. The product decarboxylates to 4-methyl-2 oxopentanoate. This Listeria innocua serovar 6a (strain ATCC BAA-680 / CLIP 11262) protein is 3-isopropylmalate dehydrogenase.